A 370-amino-acid polypeptide reads, in one-letter code: Galactose-1-phosphate uridylyltransferase (370 aa).

Zn(2+) is bound by residues cysteine 51 and cysteine 54. UDP-alpha-D-glucose-binding positions include alanine 60 and 76-77 (NG). Histidine 121 contributes to the Zn(2+) binding site. Position 166 (asparagine 166) interacts with UDP-alpha-D-glucose. Residue histidine 177 participates in Zn(2+) binding. Histidine 179 functions as the Tele-UMP-histidine intermediate in the catalytic mechanism. Glutamine 181 lines the UDP-alpha-D-glucose pocket. Fe cation contacts are provided by glutamate 195, histidine 294, histidine 311, and histidine 313. UDP-alpha-D-glucose contacts are provided by residues 326–329 (KFLV) and 331–332 (FE).

Belongs to the galactose-1-phosphate uridylyltransferase type 1 family. Homodimer. Zn(2+) serves as cofactor.

It carries out the reaction alpha-D-galactose 1-phosphate + UDP-alpha-D-glucose = alpha-D-glucose 1-phosphate + UDP-alpha-D-galactose. The protein operates within carbohydrate metabolism; galactose metabolism. The polypeptide is Galactose-1-phosphate uridylyltransferase (GAL7) (Kluyveromyces lactis (strain ATCC 8585 / CBS 2359 / DSM 70799 / NBRC 1267 / NRRL Y-1140 / WM37) (Yeast)).